The following is a 111-amino-acid chain: Ribonuclease P protein component (111 aa).

Belongs to the RnpA family. In terms of assembly, consists of a catalytic RNA component (M1 or rnpB) and a protein subunit.

The enzyme catalyses Endonucleolytic cleavage of RNA, removing 5'-extranucleotides from tRNA precursor.. In terms of biological role, RNaseP catalyzes the removal of the 5'-leader sequence from pre-tRNA to produce the mature 5'-terminus. It can also cleave other RNA substrates such as 4.5S RNA. The protein component plays an auxiliary but essential role in vivo by binding to the 5'-leader sequence and broadening the substrate specificity of the ribozyme. In Clostridium botulinum (strain Loch Maree / Type A3), this protein is Ribonuclease P protein component.